Reading from the N-terminus, the 250-residue chain is Triosephosphate isomerase (250 aa).

9 to 11 is a substrate binding site; that stretch reads NWK. H94 (electrophile) is an active-site residue. Residue E166 is the Proton acceptor of the active site. Residues G172, S212, and 233 to 234 each bind substrate; that span reads GG.

Belongs to the triosephosphate isomerase family. In terms of assembly, homodimer.

It is found in the cytoplasm. The enzyme catalyses D-glyceraldehyde 3-phosphate = dihydroxyacetone phosphate. It participates in carbohydrate biosynthesis; gluconeogenesis. It functions in the pathway carbohydrate degradation; glycolysis; D-glyceraldehyde 3-phosphate from glycerone phosphate: step 1/1. Involved in the gluconeogenesis. Catalyzes stereospecifically the conversion of dihydroxyacetone phosphate (DHAP) to D-glyceraldehyde-3-phosphate (G3P). The polypeptide is Triosephosphate isomerase (Clostridium novyi (strain NT)).